The following is a 138-amino-acid chain: uncharacterized protein (138 aa).

A Phosphoserine modification is found at S110.

The protein resides in the cytoplasm. It localises to the nucleus. This is an uncharacterized protein from Schizosaccharomyces pombe (strain 972 / ATCC 24843) (Fission yeast).